A 425-amino-acid polypeptide reads, in one-letter code: Inhibin beta A chain (425 aa).

The N-terminal stretch at methionine 1 to serine 20 is a signal peptide. Residues serine 21–arginine 309 constitute a propeptide that is removed on maturation. Asparagine 165 carries an N-linked (GlcNAc...) asparagine glycan. Positions lysine 259–arginine 289 are disordered. A compositionally biased stretch (basic and acidic residues) spans lysine 263 to glutamate 275. 4 disulfide bridges follow: cysteine 313-cysteine 321, cysteine 320-cysteine 390, cysteine 349-cysteine 422, and cysteine 353-cysteine 424.

Belongs to the TGF-beta family. In terms of assembly, dimeric, linked by one or more disulfide bonds. Inhibin A is a dimer of alpha/INHA and beta-A/INHBA. Activin A is a homodimer of beta-A/INHBA. Activin AB is a dimer of beta-A/INHBA and beta-B/INHBB. Interacts with FST and FSTL3; these interactions prevent activin A interaction to its type II receptor. Activin A interacts with ACVR2A. Activin A interacts with BMPR2. Inhibin A interacts with ACVR1; this interaction creates a non-signaling complex (NSC) that inhibits ACVR1-mediated BMP signaling. Inhibin A interacts with ACVR2A.

Its subcellular location is the secreted. Inhibins/activins are involved in regulating a number of diverse functions such as hypothalamic and pituitary hormone secretion, gonadal hormone secretion, germ cell development and maturation, erythroid differentiation, insulin secretion, nerve cell survival, embryonic axial development or bone growth, depending on their subunit composition. In terms of biological role, activin A is a homodimer of INHBA that plays a role in several essential biological processes including embryonic development, stem cell maintenance and differentiation, haematopoiesis, cell proliferation and tissue fibrosis. Signals through type I (such as ACVR1B or ACVR1C) and type II receptors (such as ACVR2A, ACVR2B or BMPR2) which, upon ligand binding, phosphorylate SMAD2 and SMAD3 intracellular signaling mediators that form a complex with SMAD4, translocate to the nucleus and modulate gene expression. Can also activate alternative non-canonical intracellular signaling pathways including the p38 MAPK, extracellular signal-regulated kinases 1/2 (ERK1/2) and c-Jun N-terminal kinases (JNKs) to modulate cell migration and differentiation. Alternatively, promotes osteoblastic differentiation via ACVRL1-SMAD1/5/9 pathway. In addition, can engage the type I receptor ACVR1 to form an ACVR1-activin A-type II receptor non-signaling complex (NSC) that renders receptors unavailable for engagement with BMPs, hence resulting in an apparent inhibition of ACVR1-mediated BMP signaling. Functionally, inhibin A is a dimer of alpha/INHA and beta-A/INHBA that functions as a feedback regulator in the hypothalamic-pituitary-gonadal (HPG) axis. Inhibits the secretion of FSH from the anterior pituitary gland by acting on pituitary gonadotrope cells. Antagonizes activin A by binding to the proteoglycan, betaglycan, and forming a stable complex with and, thereby, sequestering type II activin receptors while excluding type I receptor. The sequence is that of Inhibin beta A chain (INHBA) from Bos taurus (Bovine).